Consider the following 146-residue polypeptide: Hemoglobin subunit beta (146 aa).

The region spanning His2–His146 is the Globin domain. Heme b-binding residues include His63 and His92.

This sequence belongs to the globin family. Heterotetramer of two alpha chains and two beta chains. Red blood cells.

Involved in oxygen transport from the lung to the various peripheral tissues. This chain is Hemoglobin subunit beta (HBB), found in Streptopelia orientalis (Eastern turtle dove).